Consider the following 49-residue polypeptide: Large ribosomal subunit protein eL40 (49 aa).

This sequence belongs to the eukaryotic ribosomal protein eL40 family.

This Methanopyrus kandleri (strain AV19 / DSM 6324 / JCM 9639 / NBRC 100938) protein is Large ribosomal subunit protein eL40.